The sequence spans 997 residues: Mannuronan C5-epimerase AlgE5 (997 aa).

PbH1 repeat units lie at residues D133–E155, T157–F179, Q180–T202, T204–R226, A257–G279, A280–G315, and T320–N359. Hemolysin-type calcium-binding repeat units follow at residues G388–T403, G406–L422, G424–L439, G557–L573, V574–L590, G695–E709, H712–F729, G828–S839, G846–L862, and G864–F880.

The protein belongs to the D-mannuronate C5-epimerase family. Ca(2+) serves as cofactor.

The protein resides in the secreted. The enzyme catalyses [(1-&gt;4)-beta-D-mannuronosyl](n) = [alginate](n). The protein operates within glycan biosynthesis; alginate biosynthesis. With respect to regulation, inhibited by zinc. Functionally, converts beta-D-mannuronic acid (M) to alpha-L-guluronic acid (G), producing a polymer with gel-forming capacity, required for the formation of the cyst coat. The protein is Mannuronan C5-epimerase AlgE5 of Azotobacter vinelandii.